A 3416-amino-acid chain; its full sequence is Genome polyprotein (3416 aa).

A disordered region spans residues 1–34; sequence MAKGAVLKGKGGGPPRRVPKETAKKTRQGPGRLP. The Cytoplasmic portion of the chain corresponds to 1-99; sequence MAKGAVLKGK…NKRRGKRRST (99 aa). Positions 97 to 117 are cleaved as a propeptide — ER anchor for the capsid protein C, removed in mature form by serine protease NS3; it reads RSTTGLLTPILLACLATLVFS. Residues 100–120 form a helical membrane-spanning segment; it reads TGLLTPILLACLATLVFSATV. Topologically, residues 121–243 are extracellular; it reads RRERTGNMVI…HLTRVEGWVW (123 aa). Residue N145 is glycosylated (N-linked (GlcNAc...) asparagine; by host). A helical membrane pass occupies residues 244–261; that stretch reads KNKFLTAAFCAVVWMVTD. Position 262 (S262) is a topological domain, cytoplasmic. Residues 263–281 form a helical membrane-spanning segment; that stretch reads LPTRFIVITVALCLAPTYA. The Extracellular segment spans residues 282-728; sequence TRCTHLQNRD…HTAFGAAFNT (447 aa). Disulfide bonds link C284/C311, C341/C397, C341/C402, C355/C386, C373/C397, and C373/C402. The segment at 379 to 392 is fusion peptide; that stretch reads DRGWGNHCGLFGKG. N435 carries an N-linked (GlcNAc...) asparagine; by host glycan. Cystine bridges form between C467-C571 and C588-C619. Residues 729–749 form a helical membrane-spanning segment; it reads IFGGVGFLPRILLGVALAWLG. At 750 to 756 the chain is on the cytoplasmic side; that stretch reads LNSRNPT. Residues 757 to 777 form a helical membrane-spanning segment; the sequence is LSVGFLITGGLVLTMTLGVGA. Residues 778 to 1134 lie on the Extracellular side of the membrane; that stretch reads DMGCAIDANR…RSMVLADNGA (357 aa). Intrachain disulfides connect C781/C792, C832/C922, C957/C1002, C1059/C1108, C1070/C1092, and C1091/C1095. N-linked (GlcNAc...) asparagine; by host glycans are attached at residues N862, N985, and N1001. The helical transmembrane segment at 1135-1155 threads the bilayer; the sequence is MLSEGGVPGIVAVFVVLELVI. Residues 1156–1164 lie on the Lumenal side of the membrane; that stretch reads RRRPTTGSS. A helical membrane pass occupies residues 1165–1185; the sequence is VVWCGMVVLGLVVTGLVTIEG. The Cytoplasmic portion of the chain corresponds to 1186–1189; sequence LCRY. A helical transmembrane segment spans residues 1190-1210; that stretch reads VVAVGILMSMELGPEIVALVL. Residues 1211–1235 lie on the Lumenal side of the membrane; that stretch reads LQAVFDMRTGLLVAFAVKRAYTTRE. The helical transmembrane segment at 1236–1256 threads the bilayer; sequence AVATYFLLLVLELGFPEASLS. Residues 1257 to 1295 lie on the Cytoplasmic side of the membrane; the sequence is NIWKWADSLAMGALILQACGQEGRTRVGYLLAAMMTQKD. Residues 1296 to 1316 form a helical membrane-spanning segment; that stretch reads MVIIHTGLTIFLSAATAMAVW. The Lumenal portion of the chain corresponds to 1317-1361; that stretch reads SMIKGQRDQKGLSWATPLAGLLGGEGVGLRLLAFRKLAERRNRRS. Residues 1362 to 1379 form a helical membrane-spanning segment; the sequence is FSEPLTVVGVMLTVASGM. The Cytoplasmic segment spans residues 1380–1384; the sequence is VRHTS. The chain crosses the membrane as a helical span at residues 1385–1405; sequence QEALCALVAGAFLLLMMVLGT. Residues 1406–1456 are Lumenal-facing; sequence RKMQLTAEWCGEVEWNPDLVNEGGEVNLKVRQDAMGNLHLTEVEKEERAMA. The segment at 1412–1451 is interacts with and activates NS3 protease; it reads AEWCGEVEWNPDLVNEGGEVNLKVRQDAMGNLHLTEVEKE. The segment at residues 1457-1477 is an intramembrane region (helical); the sequence is LWLLAGLVASAFHWAGILIVL. At 1478-2162 the chain is on the lumenal side; it reads AVWTLFEMLG…RMAERDAPEA (685 aa). A Peptidase S7 domain is found at 1492-1671; it reads SELVFSGQET…EAEKSRPEIP (180 aa). Active-site charge relay system; for serine protease NS3 activity residues include H1545, D1569, and S1629. A Helicase ATP-binding domain is found at 1677–1833; sequence TGWMSKGQIT…ESNGAIMSEE (157 aa). An ATP-binding site is contributed by 1690–1697; the sequence is MHPGSGKT. The short motif at 1781–1784 is the DEAH box element; that stretch reads DEAH. The Helicase C-terminal domain occupies 1844 to 2002; sequence GFDWITEYEG…TLRGPVATFY (159 aa). An N6-acetyllysine; by host modification is found at K1885. The helical transmembrane segment at 2163–2183 threads the bilayer; it reads FLTIVEVAVLGVATLGILWCF. Residues 2184 to 2191 are Cytoplasmic-facing; sequence VARASVSR. Residues 2192-2211 constitute an intramembrane region (helical); that stretch reads MFLGTVVLFAALFLLWIGGV. Residue D2212 is a topological domain, lumenal. A helical membrane pass occupies residues 2213 to 2233; it reads YGHMAGIALIFYTLLTVLQPE. The Cytoplasmic portion of the chain corresponds to 2234 to 2246; that stretch reads PGKQRSSDDNRLA. The helical transmembrane segment at 2247–2267 threads the bilayer; sequence YFLLGLFSLAGLVTANEMGML. Over 2268 to 2301 the chain is Lumenal; it reads DKTKADLAGLVWRGEQRHPAWEEWTNVDIQPARS. An intramembrane region (helical) is located at residues 2302–2322; it reads WGTYVLIVSLFTPYMLHQLQT. The Lumenal portion of the chain corresponds to 2323 to 2345; it reads KIQQLVNSSVASGAQAMRDLGGG. An intramembrane region (helical) is located at residues 2346 to 2366; sequence TPFFGVAGHVIALGVTSLVGA. At 2367–2368 the chain is on the lumenal side; that stretch reads TP. The helical transmembrane segment at 2369–2389 threads the bilayer; sequence MSLGLGVALAAFHLAIVASGL. The Cytoplasmic portion of the chain corresponds to 2390–2432; that stretch reads EAELTQRAHRVFFSAMVKNPMVDGDVINPFPDGETKPALYERR. Residues 2433 to 2453 traverse the membrane as a helical segment; that stretch reads MSLILAIALCMGSVVLNRTAA. The Lumenal segment spans residues 2454 to 2476; the sequence is SMTEAGAVGLAALGQLVHPETET. The chain crosses the membrane as a helical span at residues 2477–2497; that stretch reads LWTMPMACGMAGLVRGSFWGL. Residues 2498–3416 lie on the Cytoplasmic side of the membrane; that stretch reads LPMGHRLWLR…WDLKLESNII (919 aa). In terms of domain architecture, mRNA cap 0-1 NS5-type MT spans 2514–2778; it reads GGAEGETLGD…EVDLGTGTRC (265 aa). Residue S2569 participates in S-adenosyl-L-methionine binding. Position 2569 is a phosphoserine (S2569). The For 2'-O-MTase activity role is filled by K2574. S-adenosyl-L-methionine is bound by residues G2599, W2600, T2617, I2618, D2644, and V2645. D2659 serves as the catalytic For 2'-O-MTase activity. I2660 serves as a coordination point for S-adenosyl-L-methionine. Active-site for 2'-O-MTase activity residues include K2696 and E2732. Positions 2732–2736 are interaction with host SCRIB; sequence EMYFS. Y2734 is an S-adenosyl-L-methionine binding site. E2952, H2956, C2961, and C2964 together coordinate Zn(2+). The RdRp catalytic domain maps to 3042–3191; that stretch reads GLFYADDTAG…RPIDDRFGKA (150 aa). Zn(2+) contacts are provided by H3226, C3242, and C3361.

In the N-terminal section; belongs to the class I-like SAM-binding methyltransferase superfamily. mRNA cap 0-1 NS5-type methyltransferase family. Homodimer. Interacts (via N-terminus) with host EXOC1 (via C-terminus); this interaction results in EXOC1 degradation through the proteasome degradation pathway. As to quaternary structure, forms heterodimers with envelope protein E in the endoplasmic reticulum and Golgi. In terms of assembly, homodimer; in the endoplasmic reticulum and Golgi. Interacts with protein prM. Interacts with non-structural protein 1. Homodimer; Homohexamer when secreted. Interacts with envelope protein E. NS1 interacts with NS4B. Interacts with host complement protein CFH; this interaction leads to the degradation of C3. As to quaternary structure, interacts (via N-terminus) with serine protease NS3. In terms of assembly, forms a heterodimer with serine protease NS3. May form homooligomers. Forms a heterodimer with NS2B. Interacts with non-structural protein 2A (via N-terminus). Interacts with NS4B. Interacts with unphosphorylated RNA-directed RNA polymerase NS5; this interaction stimulates RNA-directed RNA polymerase NS5 guanylyltransferase activity. As to quaternary structure, interacts with serine protease NS3. In terms of assembly, homodimer. Interacts with host STAT2; this interaction inhibits the phosphorylation of the latter, and, when all viral proteins are present (polyprotein), targets STAT2 for degradation. Interacts with serine protease NS3. In terms of processing, specific enzymatic cleavages in vivo yield mature proteins. Cleavages in the lumen of endoplasmic reticulum are performed by host signal peptidase, whereas cleavages in the cytoplasmic side are performed by serine protease NS3. Signal cleavage at the 2K-4B site requires a prior NS3 protease-mediated cleavage at the 4A-2K site. Post-translationally, cleaved in post-Golgi vesicles by a host furin, releasing the mature small envelope protein M, and peptide pr. This cleavage is incomplete as up to 30% of viral particles still carry uncleaved prM. N-glycosylated. In terms of processing, N-glycosylated. The excreted form is glycosylated and this is required for efficient secretion of the protein from infected cells. Post-translationally, acetylated by host KAT5. Acetylation modulates NS3 RNA-binding and unwinding activities and plays an important positive role for viral replication. Phosphorylated on serines residues. This phosphorylation may trigger NS5 nuclear localization.

The protein resides in the virion. The protein localises to the host nucleus. Its subcellular location is the host cytoplasm. It is found in the host perinuclear region. It localises to the secreted. The protein resides in the virion membrane. The protein localises to the host endoplasmic reticulum membrane. The catalysed reaction is Selective hydrolysis of -Xaa-Xaa-|-Yaa- bonds in which each of the Xaa can be either Arg or Lys and Yaa can be either Ser or Ala.. It carries out the reaction RNA(n) + a ribonucleoside 5'-triphosphate = RNA(n+1) + diphosphate. It catalyses the reaction a ribonucleoside 5'-triphosphate + H2O = a ribonucleoside 5'-diphosphate + phosphate + H(+). The enzyme catalyses ATP + H2O = ADP + phosphate + H(+). The catalysed reaction is a 5'-end (5'-triphosphoguanosine)-ribonucleoside in mRNA + S-adenosyl-L-methionine = a 5'-end (N(7)-methyl 5'-triphosphoguanosine)-ribonucleoside in mRNA + S-adenosyl-L-homocysteine. It carries out the reaction a 5'-end (N(7)-methyl 5'-triphosphoguanosine)-ribonucleoside in mRNA + S-adenosyl-L-methionine = a 5'-end (N(7)-methyl 5'-triphosphoguanosine)-(2'-O-methyl-ribonucleoside) in mRNA + S-adenosyl-L-homocysteine + H(+). Its function is as follows. Plays a role in virus budding by binding to the cell membrane and gathering the viral RNA into a nucleocapsid that forms the core of a mature virus particle. During virus entry, may induce genome penetration into the host cytoplasm after hemifusion induced by the surface proteins. Can migrate to the cell nucleus where it modulates host functions. Functionally, inhibits RNA silencing by interfering with host Dicer. Prevents premature fusion activity of envelope proteins in trans-Golgi by binding to envelope protein E at pH6.0. After virion release in extracellular space, gets dissociated from E dimers. In terms of biological role, acts as a chaperone for envelope protein E during intracellular virion assembly by masking and inactivating envelope protein E fusion peptide. prM is the only viral peptide matured by host furin in the trans-Golgi network probably to avoid catastrophic activation of the viral fusion activity in acidic Golgi compartment prior to virion release. prM-E cleavage is inefficient, and many virions are only partially matured. These uncleaved prM would play a role in immune evasion. Its function is as follows. May play a role in virus budding. Exerts cytotoxic effects by activating a mitochondrial apoptotic pathway through M ectodomain. May display a viroporin activity. Functionally, binds to host cell surface receptor and mediates fusion between viral and cellular membranes. Envelope protein is synthesized in the endoplasmic reticulum in the form of heterodimer with protein prM. They play a role in virion budding in the ER, and the newly formed immature particle is covered with 60 spikes composed of heterodimer between precursor prM and envelope protein E. The virion is transported to the Golgi apparatus where the low pH causes dissociation of PrM-E heterodimers and formation of E homodimers. prM-E cleavage is inefficient, and many virions are only partially matured. These uncleaved prM would play a role in immune evasion. Involved in immune evasion, pathogenesis and viral replication. Once cleaved off the polyprotein, is targeted to three destinations: the viral replication cycle, the plasma membrane and the extracellular compartment. Essential for viral replication. Required for formation of the replication complex and recruitment of other non-structural proteins to the ER-derived membrane structures. Excreted as a hexameric lipoparticle that plays a role against host immune response. Antagonizing the complement function. Binds to the host macrophages and dendritic cells. Inhibits signal transduction originating from Toll-like receptor 3 (TLR3). In terms of biological role, component of the viral RNA replication complex that functions in virion assembly and antagonizes the host immune response. Its function is as follows. Required cofactor for the serine protease function of NS3. May have membrane-destabilizing activity and form viroporins. Functionally, displays three enzymatic activities: serine protease, NTPase and RNA helicase. NS3 serine protease, in association with NS2B, performs its autocleavage and cleaves the polyprotein at dibasic sites in the cytoplasm: C-prM, NS2A-NS2B, NS2B-NS3, NS3-NS4A, NS4A-2K and NS4B-NS5. NS3 RNA helicase binds RNA and unwinds dsRNA in the 3' to 5' direction. Regulates the ATPase activity of the NS3 helicase activity. NS4A allows NS3 helicase to conserve energy during unwinding. In terms of biological role, functions as a signal peptide for NS4B and is required for the interferon antagonism activity of the latter. Its function is as follows. Induces the formation of ER-derived membrane vesicles where the viral replication takes place. Inhibits interferon (IFN)-induced host STAT1 phosphorylation and nuclear translocation, thereby preventing the establishment of cellular antiviral state by blocking the IFN-alpha/beta pathway. Inhibits STAT2 translocation in the nucleus after IFN-alpha treatment. Functionally, replicates the viral (+) and (-) RNA genome, and performs the capping of genomes in the cytoplasm. NS5 methylates viral RNA cap at guanine N-7 and ribose 2'-O positions. Besides its role in RNA genome replication, also prevents the establishment of cellular antiviral state by blocking the interferon-alpha/beta (IFN-alpha/beta) signaling pathway. Inhibits host TYK2 and STAT2 phosphorylation, thereby preventing activation of JAK-STAT signaling pathway. The sequence is that of Genome polyprotein from Homo sapiens (Human).